The following is a 501-amino-acid chain: Glutamyl-tRNA(Gln) amidotransferase subunit A (501 aa).

Active-site charge relay system residues include Lys-80 and Ser-155. Ser-179 functions as the Acyl-ester intermediate in the catalytic mechanism.

It belongs to the amidase family. GatA subfamily. In terms of assembly, heterotrimer of A, B and C subunits.

It carries out the reaction L-glutamyl-tRNA(Gln) + L-glutamine + ATP + H2O = L-glutaminyl-tRNA(Gln) + L-glutamate + ADP + phosphate + H(+). Allows the formation of correctly charged Gln-tRNA(Gln) through the transamidation of misacylated Glu-tRNA(Gln) in organisms which lack glutaminyl-tRNA synthetase. The reaction takes place in the presence of glutamine and ATP through an activated gamma-phospho-Glu-tRNA(Gln). This chain is Glutamyl-tRNA(Gln) amidotransferase subunit A, found in Cupriavidus taiwanensis (strain DSM 17343 / BCRC 17206 / CCUG 44338 / CIP 107171 / LMG 19424 / R1) (Ralstonia taiwanensis (strain LMG 19424)).